Here is a 492-residue protein sequence, read N- to C-terminus: GDP-Man:Man(3)GlcNAc(2)-PP-Dol alpha-1,2-mannosyltransferase (492 aa).

At 1–19 (MAAGERSWCLCKLLRFFYS) the chain is on the lumenal side. A helical transmembrane segment spans residues 20–40 (LFFPGLIVCGTLCVCLVIVLW). At 41-233 (GIRLLLQRKK…TRNPFLSKVK (193 aa)) the chain is on the cytoplasmic side. Positions 234–254 (LIYYYLFAFIYGLVGSCSDVV) form an intramembrane region, helical. Residues 255-399 (MVNSSWTLNH…IGLHTMWNEH (145 aa)) are Cytoplasmic-facing. Positions 400–420 (FGIGVVECMAAGTIILAHNSG) form an intramembrane region, helical. Residues 421–492 (GPKLDIVVPH…FLSSVEKLFK (72 aa)) lie on the Cytoplasmic side of the membrane.

This sequence belongs to the glycosyltransferase group 1 family. Glycosyltransferase 4 subfamily.

Its subcellular location is the endoplasmic reticulum membrane. The enzyme catalyses an alpha-D-Man-(1-&gt;3)-[alpha-D-Man-(1-&gt;6)]-beta-D-Man-(1-&gt;4)-beta-D-GlcNAc-(1-&gt;4)-alpha-D-GlcNAc-diphospho-di-trans,poly-cis-dolichol + 2 GDP-alpha-D-mannose = an alpha-D-Man-(1-&gt;2)-alpha-D-Man-(1-&gt;2)-alpha-D-Man-(1-&gt;3)-[alpha-D-Man-(1-&gt;6)]-beta-D-Man-(1-&gt;4)-beta-D-GlcNAc-(1-&gt;4)-alpha-D-GlcNAc-diphospho-di-trans,poly-cis-dolichol + 2 GDP + 2 H(+). Its pathway is protein modification; protein glycosylation. GDP-Man:Man(3)GlcNAc(2)-PP-Dol alpha-1,2-mannosyltransferase that operates in the biosynthetic pathway of dolichol-linked oligosaccharides, the glycan precursors employed in protein asparagine (N)-glycosylation. The assembly of dolichol-linked oligosaccharides begins on the cytosolic side of the endoplasmic reticulum membrane and finishes in its lumen. The sequential addition of sugars to dolichol pyrophosphate produces dolichol-linked oligosaccharides containing fourteen sugars, including two GlcNAcs, nine mannoses and three glucoses. Once assembled, the oligosaccharide is transferred from the lipid to nascent proteins by oligosaccharyltransferases. Catalyzes, on the cytoplasmic face of the endoplasmic reticulum, the addition of the fourth and fifth mannose residues to the dolichol-linked oligosaccharide chain, to produce Man(5)GlcNAc(2)-PP-dolichol core oligosaccharide. Man(5)GlcNAc(2)-PP-dolichol is a substrate for ALG3, the following enzyme in the biosynthetic pathway. The chain is GDP-Man:Man(3)GlcNAc(2)-PP-Dol alpha-1,2-mannosyltransferase from Homo sapiens (Human).